We begin with the raw amino-acid sequence, 414 residues long: TnpB-like protein MJ1635 (414 aa).

Residues Cys-329, Cys-332, Cys-346, and Cys-349 each coordinate Zn(2+).

The protein in the N-terminal section; belongs to the transposase 2 family. It in the C-terminal section; belongs to the transposase 35 family.

In Methanocaldococcus jannaschii (strain ATCC 43067 / DSM 2661 / JAL-1 / JCM 10045 / NBRC 100440) (Methanococcus jannaschii), this protein is TnpB-like protein MJ1635.